The chain runs to 360 residues: F-box protein SKP2B (360 aa).

The F-box domain maps to 25-76 (ISEWKDIPVELLMKILNLVDDRTVIIASCICSGWRDAVSLGLTRLSLSWCKK). LRR repeat units lie at residues 77-99 (NMNS…VLRQ), 101-126 (KPQL…DLSK), 127-152 (SSKI…NLSG), 153-178 (CTSF…NLCG), 180-205 (VEAV…NLGW), 206-231 (CENI…DLCS), 232-257 (CVLI…GLYY), 258-301 (CRNI…NISQ), and 302-333 (CTYL…VMSG).

Component of SCF(SKP2B) E3 ubiquitin ligase complexes, which mediate the ubiquitination and subsequent proteasomal degradation of the cyclin-dependent kinase inhibitor KRP1. Does not interact with auxin. The sequence is that of F-box protein SKP2B (SKP2B) from Arabidopsis thaliana (Mouse-ear cress).